The following is a 327-amino-acid chain: GTPase Obg (327 aa).

Residues 1 to 159 enclose the Obg domain; sequence MQFIDQANII…WEVQLELKLL (159 aa). The OBG-type G domain occupies 160-327; it reads AEVGIIGLPN…SLLSEVWNRI (168 aa). ATP contacts are provided by residues 166 to 173, 191 to 195, 213 to 216, 280 to 283, and 309 to 311; these read GLPNAGKS, FTTLI, DIPG, NKKE, and SSA. Positions 173 and 193 each coordinate Mg(2+).

It belongs to the TRAFAC class OBG-HflX-like GTPase superfamily. OBG GTPase family. As to quaternary structure, monomer. Requires Mg(2+) as cofactor.

The protein localises to the cytoplasm. Functionally, an essential GTPase which binds GTP, GDP and possibly (p)ppGpp with moderate affinity, with high nucleotide exchange rates and a fairly low GTP hydrolysis rate. Plays a role in control of the cell cycle, stress response, ribosome biogenesis and in those bacteria that undergo differentiation, in morphogenesis control. This chain is GTPase Obg, found in Prochlorococcus marinus (strain MIT 9515).